The primary structure comprises 131 residues: Protein ApaG (131 aa).

Residues 3 to 127 (RAVTRQIEVT…FSLDSPDGGK (125 aa)) form the ApaG domain.

The polypeptide is Protein ApaG (Bradyrhizobium sp. (strain BTAi1 / ATCC BAA-1182)).